The following is a 355-amino-acid chain: Fructose-1,6-bisphosphatase class 1 (355 aa).

Mg(2+) contacts are provided by Glu-90, Asp-109, Leu-111, and Asp-112. Substrate is bound by residues 112–115, Asn-204, and 256–258; these read DGSS and YLY. Glu-276 is a binding site for Mg(2+).

The protein belongs to the FBPase class 1 family. In terms of assembly, homotetramer. Mg(2+) is required as a cofactor.

It is found in the cytoplasm. It catalyses the reaction beta-D-fructose 1,6-bisphosphate + H2O = beta-D-fructose 6-phosphate + phosphate. It participates in carbohydrate biosynthesis; gluconeogenesis. This Acidiphilium cryptum (strain JF-5) protein is Fructose-1,6-bisphosphatase class 1.